The sequence spans 187 residues: Adenine phosphoribosyltransferase (187 aa).

Belongs to the purine/pyrimidine phosphoribosyltransferase family. Homodimer.

The protein localises to the cytoplasm. The enzyme catalyses AMP + diphosphate = 5-phospho-alpha-D-ribose 1-diphosphate + adenine. The protein operates within purine metabolism; AMP biosynthesis via salvage pathway; AMP from adenine: step 1/1. In terms of biological role, catalyzes a salvage reaction resulting in the formation of AMP, that is energically less costly than de novo synthesis. The protein is Adenine phosphoribosyltransferase of Yersinia pseudotuberculosis serotype O:3 (strain YPIII).